Here is a 315-residue protein sequence, read N- to C-terminus: tRNA dimethylallyltransferase (315 aa).

Residue 11-18 (GPTASGKS) participates in ATP binding. 13 to 18 (TASGKS) contacts substrate. 2 interaction with substrate tRNA regions span residues 36 to 39 (DSMQ) and 160 to 164 (QRLIR).

This sequence belongs to the IPP transferase family. Monomer. Mg(2+) is required as a cofactor.

It catalyses the reaction adenosine(37) in tRNA + dimethylallyl diphosphate = N(6)-dimethylallyladenosine(37) in tRNA + diphosphate. Catalyzes the transfer of a dimethylallyl group onto the adenine at position 37 in tRNAs that read codons beginning with uridine, leading to the formation of N6-(dimethylallyl)adenosine (i(6)A). This chain is tRNA dimethylallyltransferase, found in Rickettsia bellii (strain RML369-C).